A 385-amino-acid chain; its full sequence is MPIYILIERSVKNGRIDFWNEDAIRTLGKAILDRDYSLRVEFPENRLCPMVPNRATYIRYIHDLLSSTSGQKDKKRIIGLDIGTGASCIYPLLGCRMYSYDFVGTEIDKFSFETAKSNILQNNMESQIKIVLRSKQDCLLPDTEGMEEFTFVMCNPPFYEHEEDFINFKQNPPSGVCTGVYHEMVTEGGEVGFANKILTESKKRKGIQWYTCMFGKKSSVPAVVDKLREQNISNYGIYELALGKTKRWIICWSFQAMRPHNELIRPSSTSLSKYFPHKVLQNWTLDPELCAQIDDILQKFLDDNKIPWSKKGSVLEISTKSITWSRKARRISKSQTSVSSLEGQMKCELNVIDNQLQCKWIEGYDYNVYESFCSALARALRDNKK.

S-adenosyl-L-methionine is bound by residues arginine 54, glycine 83, glutamate 106, and asparagine 155.

It belongs to the methyltransferase superfamily. METTL16/RlmF family.

The protein resides in the cytoplasm. It is found in the nucleus. It catalyses the reaction adenosine in U6 snRNA + S-adenosyl-L-methionine = N(6)-methyladenosine in U6 snRNA + S-adenosyl-L-homocysteine + H(+). Its function is as follows. RNA N6-methyltransferase that mediates N6-methylation of adenine of U6 small nuclear RNA (U6 snRNA). In Schizosaccharomyces pombe (strain 972 / ATCC 24843) (Fission yeast), this protein is U6 small nuclear RNA (adenine-(43)-N(6))-methyltransferase.